The following is a 250-amino-acid chain: 1-(5-phosphoribosyl)-5-[(5-phosphoribosylamino)methylideneamino] imidazole-4-carboxamide isomerase (250 aa).

The active-site Proton acceptor is Asp8. Asp131 serves as the catalytic Proton donor.

Belongs to the HisA/HisF family.

It localises to the cytoplasm. The enzyme catalyses 1-(5-phospho-beta-D-ribosyl)-5-[(5-phospho-beta-D-ribosylamino)methylideneamino]imidazole-4-carboxamide = 5-[(5-phospho-1-deoxy-D-ribulos-1-ylimino)methylamino]-1-(5-phospho-beta-D-ribosyl)imidazole-4-carboxamide. It participates in amino-acid biosynthesis; L-histidine biosynthesis; L-histidine from 5-phospho-alpha-D-ribose 1-diphosphate: step 4/9. In Paraburkholderia phytofirmans (strain DSM 17436 / LMG 22146 / PsJN) (Burkholderia phytofirmans), this protein is 1-(5-phosphoribosyl)-5-[(5-phosphoribosylamino)methylideneamino] imidazole-4-carboxamide isomerase.